Here is a 315-residue protein sequence, read N- to C-terminus: Ribose-phosphate pyrophosphokinase (315 aa).

ATP is bound by residues 37–39 (DGE) and 96–97 (RQ). Positions 131 and 171 each coordinate Mg(2+). Lys-195 is a catalytic residue. Residues Arg-197, Asp-221, and 225–229 (DTGGT) contribute to the D-ribose 5-phosphate site.

This sequence belongs to the ribose-phosphate pyrophosphokinase family. Class I subfamily. In terms of assembly, homohexamer. It depends on Mg(2+) as a cofactor.

The protein localises to the cytoplasm. It catalyses the reaction D-ribose 5-phosphate + ATP = 5-phospho-alpha-D-ribose 1-diphosphate + AMP + H(+). The protein operates within metabolic intermediate biosynthesis; 5-phospho-alpha-D-ribose 1-diphosphate biosynthesis; 5-phospho-alpha-D-ribose 1-diphosphate from D-ribose 5-phosphate (route I): step 1/1. Functionally, involved in the biosynthesis of the central metabolite phospho-alpha-D-ribosyl-1-pyrophosphate (PRPP) via the transfer of pyrophosphoryl group from ATP to 1-hydroxyl of ribose-5-phosphate (Rib-5-P). This is Ribose-phosphate pyrophosphokinase from Pasteurella multocida (strain Pm70).